A 5400-amino-acid polypeptide reads, in one-letter code: Midasin (5400 aa).

6 AAA-ATPase protomer regions span residues 345–571 (MVSL…HGLP), 656–986 (LLEK…AIKA), 1050–1308 (SYVK…EKVV), 1347–1652 (SMRR…VNMA), 1769–2023 (VLRV…VLRI), and 2074–2347 (IRQN…MMGP). Residues 360 to 367 (GPSGSGKS), 674 to 681 (GETGTGKT), 1079 to 1086 (GPTSSGKT), 1369 to 1376 (GDTGGGKT), 1786 to 1793 (GSPGVGKT), and 2095 to 2102 (GPSSSGKT) each bind ATP. The tract at residues 2435–4569 (IYLSSLGVTD…DGVGAKDVSD (2135 aa)) is linker. Coiled coils occupy residues 2896–2916 (LERLKLEKKRLEDKMGFSEID), 3233–3253 (AMKITCKLLKLEEKISSLELN), and 3896–3916 (MEQLDLNRKNVETELKEVLKL). Disordered regions lie at residues 4540-4890 (EEDD…SSSN), 4905-4929 (TLTDNLPKMEFPQNQSSTAQQTKVN), and 4990-5069 (QVNT…RMDS). Positions 4576 to 4612 (QLHGTDKKEEEEKEQDDVLGKNKGIEMSDEFDGKEYS) are enriched in basic and acidic residues. The span at 4613–4631 (VSEDEEEDKEDEGSEDEPL) shows a compositional bias: acidic residues. Composition is skewed to basic and acidic residues over residues 4641–4652 (DAEKADEKPWNK) and 4661–4687 (MNEKNESGPSIVDKDTRSRELRAKDDG). 2 stretches are compositionally biased toward acidic residues: residues 4688–4698 (VETADEPEESN) and 4706–4721 (GNDENVEQDDFDDTDN). Positions 4722–4732 (LEEKIQTKEEA) are enriched in basic and acidic residues. Residues 4740–4750 (VDNEQIDDDME) are compositionally biased toward acidic residues. The span at 4751–4762 (MDKTEEVEKEDA) shows a compositional bias: basic and acidic residues. Positions 4779 to 4798 (GENDQEETQEPSEENMEAEA) are enriched in acidic residues. Positions 4799–4810 (EDRCGSPQKEEP) are enriched in basic and acidic residues. The span at 4811–4822 (GNDLEQEPETEP) shows a compositional bias: acidic residues. The span at 4823–4834 (IEGKEVMSEDMM) shows a compositional bias: basic and acidic residues. 4 stretches are compositionally biased toward polar residues: residues 4839 to 4855 (RNDNISGVESGSQNPHG), 4864 to 4874 (TAPQENLSATD), 4916 to 4928 (PQNQSSTAQQTKV), and 5030 to 5040 (SKPSISNSIAE). Positions 5157 to 5164 (MKKVIPYI) match the Nuclear localization signal motif. One can recognise a VWFA domain in the interval 5186-5387 (QVVIAVDDSR…EALPRTLGDV (202 aa)). Residues 5271–5291 (VVNLLRNMNEMLENLASTRRQ) adopt a coiled-coil conformation.

This sequence belongs to the midasin family. As to quaternary structure, associates with pre-60S ribosomes in the nucleoplasm. As to expression, constitutively and ubiquitously expressed. Mostly observed in the shoot apex and root tip, and, to a lower extent, in mature seeds, seedling (excluding the hypocotyl), roots, stems, leaves and flowers.

The protein localises to the nucleus. It localises to the nucleolus. It is found in the nucleoplasm. Functionally, nuclear chaperone required for maturation and nuclear export of pre-60S ribosome subunits. Functions at successive maturation steps to remove ribosomal factors at critical transition points, first driving the exit of early pre-60S particles from the nucleolus and then driving late pre-60S particles from the nucleus. Required for female gametophyte development. Involved in the expression regulation of genes related to plant growth and development. The chain is Midasin from Arabidopsis thaliana (Mouse-ear cress).